We begin with the raw amino-acid sequence, 214 residues long: Superoxide dismutase [Mn] (214 aa).

Histidine 27, histidine 82, aspartate 169, and histidine 173 together coordinate Mn(2+).

This sequence belongs to the iron/manganese superoxide dismutase family. In terms of assembly, homodimer. Requires Mn(2+) as cofactor.

The catalysed reaction is 2 superoxide + 2 H(+) = H2O2 + O2. Destroys superoxide anion radicals which are normally produced within the cells and which are toxic to biological systems. In Pasteurella multocida (strain Pm70), this protein is Superoxide dismutase [Mn] (sodA).